Here is a 246-residue protein sequence, read N- to C-terminus: Probable aquaporin AqpM (246 aa).

Residues 1–12 are Cytoplasmic-facing; that stretch reads MTMTLAKRFTAE. A helical transmembrane segment spans residues 13-33; the sequence is VVGTFILVFFGPGAAVITLMI. At 34–56 the chain is on the extracellular side; the sequence is ANGADKPNEFNIGIGALGGLGDW. The helical transmembrane segment at 57–77 threads the bilayer; that stretch reads FAIGMAFALAIAAVIYSLGRI. Residues 78-104 are Cytoplasmic-facing; sequence SGAHINPAVTIALWSIGRFPGREVVPY. The NPA 1 motif lies at 83-85; it reads NPA. A helical membrane pass occupies residues 105 to 125; it reads IVAQFIGAALGSLLFLACVGP. The Extracellular portion of the chain corresponds to 126–146; the sequence is AAATVGGLGATAPFPGIGYGQ. A helical membrane pass occupies residues 147–167; it reads AILTEAIGTFLLMLVIMGVAV. Topologically, residues 168–173 are cytoplasmic; sequence DERAPP. The helical transmembrane segment at 174–194 threads the bilayer; that stretch reads GFAGLVIGLTVGGIITTIGNI. The Extracellular segment spans residues 195–217; that stretch reads TGSSLNPARTFGPYLGDSLMGIN. The NPA 2 motif lies at 200-202; it reads NPA. A helical transmembrane segment spans residues 218–238; the sequence is LWQYFPIYVIGPIVGAVAAAW. The Cytoplasmic portion of the chain corresponds to 239-246; sequence LYNYLAKE.

The protein belongs to the MIP/aquaporin (TC 1.A.8) family.

The protein resides in the cell membrane. Channel that permits osmotically driven movement of water in both directions. In Archaeoglobus fulgidus (strain ATCC 49558 / DSM 4304 / JCM 9628 / NBRC 100126 / VC-16), this protein is Probable aquaporin AqpM (aqpM).